The chain runs to 357 residues: UDP-arabinopyranose mutase 1 (357 aa).

Val-2 is modified (N-acetylvaline). A DXD motif motif is present at residues 110-112 (DDD). Arg-158 carries an N-linked (Glc...) arginine glycan.

Belongs to the RGP family. Heteromers with RGP2, RGP3, RGP4 and RGP5. Mn(2+) serves as cofactor. Requires Mg(2+) as cofactor. In terms of processing, reversibly glycosylated in vitro by UDP-glucose, UDP-xylose and UDP-galactose, but not UDP-mannose. Predominantly expressed in shoot and root apical meristems. Expressed in epidermal cells of leaves, inflorescence stems and seed coat. Expressed in pollen.

Its subcellular location is the cytoplasm. It localises to the cytosol. It is found in the golgi apparatus. It carries out the reaction UDP-beta-L-arabinofuranose = UDP-beta-L-arabinopyranose. Functionally, UDP-L-arabinose mutase involved in the biosynthesis of cell wall non-cellulosic polysaccharides. Catalyzes the interconvertion of UDP-L-arabinopyranose (UDP-Arap) and UDP-L-arabinofuranose (UDP-Araf) in vitro. Preferentially catalyzes the formation of UDP-Arap from UDP-Araf. At thermodynamic equilibrium in vitro the ratio of the pyranose form over the furanose form is 95:5. Is not active on other UDP-sugars (UDP-Gal, UDP-Xyl, UDP-Glc, GDP-Man and GDP-Fuc). Functions redundantly with RGP2 and is essential for proper cell walls and pollen development. Probably involved in the formation of the pectocellulosic cell wall layer intine. Is probably active as heteromer in vivo. The chain is UDP-arabinopyranose mutase 1 from Arabidopsis thaliana (Mouse-ear cress).